The sequence spans 119 residues: Protein TusC (119 aa).

The protein belongs to the DsrF/TusC family. Heterohexamer, formed by a dimer of trimers. The hexameric TusBCD complex contains 2 copies each of TusB, TusC and TusD. The TusBCD complex interacts with TusE.

It is found in the cytoplasm. Functionally, part of a sulfur-relay system required for 2-thiolation of 5-methylaminomethyl-2-thiouridine (mnm(5)s(2)U) at tRNA wobble positions. The protein is Protein TusC of Buchnera aphidicola subsp. Schizaphis graminum (strain Sg).